The following is a 103-amino-acid chain: Small ribosomal subunit protein uS10 (103 aa).

The protein belongs to the universal ribosomal protein uS10 family. As to quaternary structure, part of the 30S ribosomal subunit.

Its function is as follows. Involved in the binding of tRNA to the ribosomes. The protein is Small ribosomal subunit protein uS10 of Polynucleobacter asymbioticus (strain DSM 18221 / CIP 109841 / QLW-P1DMWA-1) (Polynucleobacter necessarius subsp. asymbioticus).